The following is a 367-amino-acid chain: Anthranilate phosphoribosyltransferase (367 aa).

The span at 1-17 (MVLSSEASSAADHSAAA) shows a compositional bias: low complexity. The interval 1–22 (MVLSSEASSAADHSAAAPIPTS) is disordered. 5-phospho-alpha-D-ribose 1-diphosphate is bound by residues Gly-104, 107–108 (GD), Thr-112, 114–117 (NLST), 132–140 (KHGNRAASS), and Gly-144. Gly-104 is an anthranilate binding site. Residue Ser-116 coordinates Mg(2+). Asn-135 serves as a coordination point for anthranilate. Residue Arg-190 coordinates anthranilate. Mg(2+)-binding residues include Asp-248 and Glu-249.

The protein belongs to the anthranilate phosphoribosyltransferase family. Homodimer. Mg(2+) is required as a cofactor.

It carries out the reaction N-(5-phospho-beta-D-ribosyl)anthranilate + diphosphate = 5-phospho-alpha-D-ribose 1-diphosphate + anthranilate. Its pathway is amino-acid biosynthesis; L-tryptophan biosynthesis; L-tryptophan from chorismate: step 2/5. In terms of biological role, catalyzes the transfer of the phosphoribosyl group of 5-phosphorylribose-1-pyrophosphate (PRPP) to anthranilate to yield N-(5'-phosphoribosyl)-anthranilate (PRA). This Mycobacterium marinum (strain ATCC BAA-535 / M) protein is Anthranilate phosphoribosyltransferase.